The sequence spans 109 residues: uncharacterized protein (109 aa).

The helical transmembrane segment at 78-98 (YTCIMYIGLLCMFVLLYMTVI) threads the bilayer.

The protein localises to the membrane. This is an uncharacterized protein from Saccharomyces cerevisiae (strain ATCC 204508 / S288c) (Baker's yeast).